A 449-amino-acid polypeptide reads, in one-letter code: Type 3 secretion system ATPase (449 aa).

178-183 (GCGKTT) is a binding site for ATP.

This sequence belongs to the ATPase alpha/beta chains family. T3SS ATPase subfamily. The core secretion machinery of the T3SS is composed of approximately 20 different proteins, including cytoplasmic components, a base, an export apparatus and a needle. This subunit is part of the cytosolic complex. Forms homododecamers.

It is found in the cytoplasm. The enzyme catalyses ATP + H2O + cellular proteinSide 1 = ADP + phosphate + cellular proteinSide 2.. In terms of biological role, ATPase component of the type III secretion system (T3SS), also called injectisome, which is used to inject bacterial effector proteins into eukaryotic host cells. Acts as a molecular motor to provide the energy that is required for the export of proteins. Required for type III secretion apparatus (T3SA) formation, proper protein secretion, host cell invasion and virulence. May play a critical role in T3SS substrate recognition, disassembly of the effector/chaperone complex and unfolding of the effector in an ATP-dependent manner prior to secretion. This chain is Type 3 secretion system ATPase, found in Pseudomonas syringae pv. tomato (strain ATCC BAA-871 / DC3000).